The chain runs to 66 residues: LYR motif-containing protein PHYPADRAFT_186863 (66 aa).

This sequence belongs to the complex I LYR family. LYRM9 subfamily.

This Physcomitrium patens (Spreading-leaved earth moss) protein is LYR motif-containing protein PHYPADRAFT_186863.